Here is a 125-residue protein sequence, read N- to C-terminus: Protein JAZ13 (125 aa).

Residues 6–10 (LDLHL) carry the EAR motif. The tract at residues 99-125 (KKRSKSFTLTPNYTSSTSSSSSSLHNF) is disordered. Positions 112–125 (TSSTSSSSSSLHNF) are enriched in low complexity.

In terms of assembly, monomer. Lack of homodimerization, and very weak or no interaction with AFPH2/NINJA and other JAZ proteins. Interacts (via EAR motif) with TPL. Interacts (via jas motif) with MYC2. In terms of processing, phosphorylated at multiple serine residues.

Its function is as follows. Non-TIFY functional repressor of jasmonate (JA)-mediated growth and defense responses. Intrinsically resistant to JA-induced turnover, probably due to the absence of the canonical degron that strongly interacts with COI1 in the presence of JA-Ile in the TIFY/JAZ proteins. This chain is Protein JAZ13, found in Arabidopsis thaliana (Mouse-ear cress).